The sequence spans 1305 residues: Contactin-associated protein-like 5 (1305 aa).

Residues 1–22 form the signal peptide; that stretch reads MDSPALGAVALLLAGFWHLGLT. The region spanning 23–174 is the F5/8 type C domain; that stretch reads ATNYNCDGAL…IGLRVEVFGC (152 aa). Topologically, residues 23–1236 are extracellular; that stretch reads ATNYNCDGAL…PLTNAVRSDS (1214 aa). Laminin G-like domains lie at 180–360 and 367–544; these read IADF…TFSC and PITF…IDLC. 5 disulfides stabilise this stretch: C329–C360, C512–C544, C550–C561, C555–C570, and C572–C582. The EGF-like 1 domain maps to 546–583; it reads IKDRCLPNYCEHGGKCSQSWTTFYCDCNDTSYMGATCH. Residues 584-790 form the Fibrinogen C-terminal domain; it reads NSIYEQSCEA…LHCYGDRQFW (207 aa). Positions 791 to 956 constitute a Laminin G-like 3 domain; that stretch reads NAASFNTEAS…KMTPGVKPGC (166 aa). 5 disulfide bridges follow: C929–C956, C960–C973, C967–C982, C984–C994, and C1163–C1198. The EGF-like 2 domain maps to 957 to 995; sequence PGHCSSYGNLCHNGGKCVEKYNGYSCDCTSSAYEGPFCK. Positions 1017–1198 constitute a Laminin G-like 4 domain; sequence PVTKNASTSS…VKGSLTESSC (182 aa). A helical membrane pass occupies residues 1237–1257; the sequence is AVIGGVIAVVIFIIFCIIAIM. Topologically, residues 1258–1305 are cytoplasmic; that stretch reads SRFLYQHKQAHRSSQTKEKEYPENLESSFKADIDLQNTVSECKREYFI.

The protein belongs to the neurexin family. Expressed in brain.

The protein resides in the membrane. Functionally, may play a role in the correct development and proper functioning of the peripheral and central nervous system and be involved in cell adhesion and intercellular communication. The protein is Contactin-associated protein-like 5 (CNTNAP5) of Gallus gallus (Chicken).